A 46-amino-acid chain; its full sequence is Iota-conotoxin-like M11.1 (46 aa).

Intrachain disulfides connect Cys-5–Cys-19, Cys-12–Cys-22, Cys-18–Cys-27, and Cys-21–Cys-38. Position 44 is a D-methionine (Met-44). Residue Arg-46 is a propeptide, removed by a carboxypeptidase.

It belongs to the conotoxin I1 superfamily. As to expression, expressed by the venom duct.

Its subcellular location is the secreted. Iota-conotoxins bind to voltage-gated sodium channels (Nav) and act as agonists by shifting the voltage-dependence of activation to more hyperpolarized levels. Produces general excitatory symptoms. This chain is Iota-conotoxin-like M11.1, found in Conus magus (Magical cone).